The sequence spans 223 residues: UPF0441 protein YgiB (223 aa).

Low complexity predominate over residues 178 to 195; that stretch reads TVPKTAMAPKPATTTTVT. Positions 178–223 are disordered; sequence TVPKTAMAPKPATTTTVTRGGFGESVAKQSTLQRSATGTSSRSMGG. Over residues 204-223 the composition is skewed to polar residues; the sequence is AKQSTLQRSATGTSSRSMGG.

The protein belongs to the UPF0441 family.

The polypeptide is UPF0441 protein YgiB (Escherichia coli (strain ATCC 8739 / DSM 1576 / NBRC 3972 / NCIMB 8545 / WDCM 00012 / Crooks)).